The primary structure comprises 193 residues: MKGLHLHLVLVTMTIVASIAAAAPAAPGGALADECNQDFQKVTLCLDFATGKATIPSKKCCDAVEDIKERDPKCLCFVIQQAKTGGQALKDLGVQEDKLIQLPTSCQLHNASITNCPKLLGISPSSPDAAVFTNNATTTPVAPAGKSPATPATSTDKGGSASAKDGHAVVALAVALMAVSFVLTLPRHVTLGM.

The signal sequence occupies residues 1-22 (MKGLHLHLVLVTMTIVASIAAA). 4 disulfides stabilise this stretch: cysteine 35-cysteine 76, cysteine 45-cysteine 60, cysteine 61-cysteine 106, and cysteine 74-cysteine 116. Asparagine 110 and asparagine 135 each carry an N-linked (GlcNAc...) asparagine glycan. Positions 138–161 (TTPVAPAGKSPATPATSTDKGGSA) are disordered. A lipid anchor (GPI-anchor amidated aspartate) is attached at aspartate 165. A propeptide spans 166–193 (GHAVVALAVALMAVSFVLTLPRHVTLGM) (removed in mature form).

It belongs to the plant LTP family. Post-translationally, O-glycosylated on hydroxyprolines; noncontiguous hydroxylproline residues are glycosylated with arabinogalactan. As to expression, up-regulated in the epidermis of stems and leaves. Expressed in the epidermis, stem cortex, vascular bundles and mesophyll cells in root tips, cotyledons, seedlings, leaves, caulines, flowers, siliques, pollen, and early-developing seeds.

It localises to the cell membrane. Its subcellular location is the secreted. It is found in the cell wall. The protein localises to the endoplasmic reticulum. The protein resides in the golgi apparatus. In terms of biological role, lipid transfer protein that, together with LTPG2, binds to lipids and functions as a component of the cuticular lipid export machinery that performs extensive export of intracellular lipids (e.g. C29 alkane) from epidermal cells to the surface to build the cuticular wax layer and silique walls. Involved in the establishment of resistance to the necrotrophic fungal pathogen Alternaria brassicicola. Contributes to pre-invasive defense against some non-host powdery mildew pathogens by preventing the penetration of the epidermal cell wall by the fungal agents (e.g. Blumeria graminis f. sp. hordei (Bgh)). Maybe involved in seed and ovule maturation and development, probably by regulating the fatty acids homeostasis during suberin and sporopollenin biosynthesis or deposition. The polypeptide is Non-specific lipid transfer protein GPI-anchored 1 (Arabidopsis thaliana (Mouse-ear cress)).